The following is a 162-amino-acid chain: Regulator of sigma D (162 aa).

It belongs to the Rsd/AlgQ family. Interacts with RpoD.

The protein resides in the cytoplasm. Its function is as follows. Binds RpoD and negatively regulates RpoD-mediated transcription activation by preventing the interaction between the primary sigma factor RpoD with the catalytic core of the RNA polymerase and with promoter DNA. May be involved in replacement of the RNA polymerase sigma subunit from RpoD to RpoS during the transition from exponential growth to the stationary phase. This is Regulator of sigma D from Salmonella paratyphi A (strain ATCC 9150 / SARB42).